The following is a 200-amino-acid chain: Dephospho-CoA kinase (200 aa).

The region spanning 4–200 (VIGLTGGIAS…VILKKWNIID (197 aa)) is the DPCK domain. An ATP-binding site is contributed by 12-17 (ASGKST).

This sequence belongs to the CoaE family.

It is found in the cytoplasm. The enzyme catalyses 3'-dephospho-CoA + ATP = ADP + CoA + H(+). It functions in the pathway cofactor biosynthesis; coenzyme A biosynthesis; CoA from (R)-pantothenate: step 5/5. In terms of biological role, catalyzes the phosphorylation of the 3'-hydroxyl group of dephosphocoenzyme A to form coenzyme A. This Bacillus cereus (strain ATCC 14579 / DSM 31 / CCUG 7414 / JCM 2152 / NBRC 15305 / NCIMB 9373 / NCTC 2599 / NRRL B-3711) protein is Dephospho-CoA kinase.